We begin with the raw amino-acid sequence, 142 residues long: Small heat shock protein IbpB (142 aa).

Residues 25–136 enclose the sHSP domain; that stretch reads GQEPQGFPPY…QPQRIAIGTT (112 aa).

The protein belongs to the small heat shock protein (HSP20) family. Homodimer. Forms homomultimers of about 100-150 subunits at optimal growth temperatures. Conformation changes to oligomers at high temperatures or high ionic concentrations. The decrease in size of the multimers is accompanied by an increase in chaperone activity.

The protein localises to the cytoplasm. Functionally, associates with aggregated proteins, together with IbpA, to stabilize and protect them from irreversible denaturation and extensive proteolysis during heat shock and oxidative stress. Aggregated proteins bound to the IbpAB complex are more efficiently refolded and reactivated by the ATP-dependent chaperone systems ClpB and DnaK/DnaJ/GrpE. Its activity is ATP-independent. The polypeptide is Small heat shock protein IbpB (Serratia proteamaculans (strain 568)).